Reading from the N-terminus, the 427-residue chain is Thyroid hormone receptor alpha-A (427 aa).

The segment covering 1-11 (MENTEQEHNLP) has biased composition (basic and acidic residues). The interval 1–40 (MENTEQEHNLPEGDETQWPNGVKRKRKNSQCSMNSTSDKS) is disordered. The modulating stretch occupies residues 1 to 56 (MENTEQEHNLPEGDETQWPNGVKRKRKNSQCSMNSTSDKSISVPGYVPSYLEKDEP). A compositionally biased stretch (polar residues) spans 29–40 (SQCSMNSTSDKS). 2 consecutive NR C4-type zinc fingers follow at residues 57 to 77 (CVVCGDKATGYHYRCITCEGC) and 95 to 119 (CKYDSCCIIDKITRNQCQLCRFRKC). The nuclear receptor DNA-binding region spans 57-131 (CVVCGDKATG…VGMAMDLVLD (75 aa)). An NR LBD domain is found at 167 to 410 (SEWELIRMVT…PPLFLEVFED (244 aa)).

The protein belongs to the nuclear hormone receptor family. NR1 subfamily. In terms of assembly, interacts with ncoa2. After the mid-blastula transition (MBT), expressed throughout the deep cells, which give rise to the embryo proper. In adults, isoform 2 shows highest expression in the eye and liver. Expressed in adult gonads.

The protein resides in the nucleus. In terms of biological role, high affinity receptor for triiodothyronine. In the absence of thyroid hormone during late blastula stage development, acts as a transcriptional repressor. Whereas in the presence of thyroid hormone, can act as an activator of transcription. In addition, represses retinoic acid (RA)-signaling during blastula and gastrula stages of development. This is Thyroid hormone receptor alpha-A (thraa) from Danio rerio (Zebrafish).